A 504-amino-acid polypeptide reads, in one-letter code: Deoxyguanosinetriphosphate triphosphohydrolase (504 aa).

The HD domain maps to 66 to 273 (RLTHSLEVQQ…MEAADDISYC (208 aa)).

The protein belongs to the dGTPase family. Type 1 subfamily. As to quaternary structure, homotetramer. Mg(2+) serves as cofactor.

The enzyme catalyses dGTP + H2O = 2'-deoxyguanosine + triphosphate + H(+). Its function is as follows. dGTPase preferentially hydrolyzes dGTP over the other canonical NTPs. The protein is Deoxyguanosinetriphosphate triphosphohydrolase of Cronobacter sakazakii (strain ATCC BAA-894) (Enterobacter sakazakii).